Reading from the N-terminus, the 93-residue chain is Large ribosomal subunit protein uL23cz/uL23cy (93 aa).

The protein belongs to the universal ribosomal protein uL23 family. In terms of assembly, part of the 50S ribosomal subunit.

Its subcellular location is the plastid. The protein resides in the chloroplast. In terms of biological role, binds to 23S rRNA. This Piper cenocladum (Ant piper) protein is Large ribosomal subunit protein uL23cz/uL23cy (rpl23-A).